A 164-amino-acid polypeptide reads, in one-letter code: Histone H1 (164 aa).

The segment covering 1-10 has biased composition (polar residues); the sequence is MAPRSSTSKS. Positions 1-164 are disordered; the sequence is MAPRSSTSKS…KKSSKPAKKN (164 aa). The segment covering 16-27 has biased composition (basic residues); the sequence is KDHKKAPIKKAI. Phosphothreonine is present on residues T47 and T54. 3 stretches are compositionally biased toward basic and acidic residues: residues 49–61, 69–89, and 117–156; these read VKKDVTPVKADTK, TMKETVSDAKKTVHAAAGDKK, and TKKEVKKDNKTAKKETKKDHKPAKKEAKKETKPAKKDAKK.

Cell-growth/division-associated phosphorylation by a CDC2-like kinase.

It localises to the nucleus. Its subcellular location is the chromosome. Histones H1 are necessary for the condensation of nucleosome chains into higher-order structures. The chain is Histone H1 (HHO) from Tetrahymena thermophila (strain SB210).